The following is a 547-amino-acid chain: Chaperonin GroEL (547 aa).

Residues 30–33 (TLGP), Lys51, 87–91 (DGTTT), Gly415, and Asp496 each bind ATP. Positions 528-547 (DKSDMPAMPPGGMGGMGGMY) are disordered. Gly residues predominate over residues 538-547 (GGMGGMGGMY).

This sequence belongs to the chaperonin (HSP60) family. Forms a cylinder of 14 subunits composed of two heptameric rings stacked back-to-back. Interacts with the co-chaperonin GroES.

The protein localises to the cytoplasm. It carries out the reaction ATP + H2O + a folded polypeptide = ADP + phosphate + an unfolded polypeptide.. Together with its co-chaperonin GroES, plays an essential role in assisting protein folding. The GroEL-GroES system forms a nano-cage that allows encapsulation of the non-native substrate proteins and provides a physical environment optimized to promote and accelerate protein folding. The chain is Chaperonin GroEL from Chlorobium luteolum (strain DSM 273 / BCRC 81028 / 2530) (Pelodictyon luteolum).